The following is a 537-amino-acid chain: Extracellular exo-inulinase inuE (537 aa).

Residues 1 to 19 (MARLLKAVTVCALAGIAHA) form the signal peptide. Residue D41 is part of the active site. N49, N67, N112, N300, N363, N398, N430, and N531 each carry an N-linked (GlcNAc...) asparagine glycan.

Belongs to the glycosyl hydrolase 32 family.

It localises to the secreted. The enzyme catalyses Hydrolysis of terminal, non-reducing (2-&gt;1)- and (2-&gt;6)-linked beta-D-fructofuranose residues in fructans.. Its activity is regulated as follows. The catalytic activity is increased by manganese cathions, but strongly inhibited by other metal ions such as copper, aluminum, silver, iron, nickel, zinc and magnesium cathions. Its function is as follows. Exo-inulinase involved in utilization of the plant storage polymer inulin, consisting of fructooligosaccharides with a degree of polymerization (DP) value from 2 to 60. Splits off terminal fructose units successively from the non-reducing end of the inulin molecule, and also hydrolyze sucrose and raffinose. The protein is Extracellular exo-inulinase inuE (exoI) of Aspergillus ficuum.